The following is a 291-amino-acid chain: N-acetylmannosamine kinase (291 aa).

ATP-binding positions include 5–12 and 132–139; these read AIDIGGTK and GVGGGVVC. Residues H156, C166, C168, and C173 each contribute to the Zn(2+) site.

The protein belongs to the ROK (NagC/XylR) family. NanK subfamily. Homodimer.

The enzyme catalyses an N-acyl-D-mannosamine + ATP = an N-acyl-D-mannosamine 6-phosphate + ADP + H(+). It participates in amino-sugar metabolism; N-acetylneuraminate degradation; D-fructose 6-phosphate from N-acetylneuraminate: step 2/5. Functionally, catalyzes the phosphorylation of N-acetylmannosamine (ManNAc) to ManNAc-6-P. The sequence is that of N-acetylmannosamine kinase from Salmonella paratyphi A (strain ATCC 9150 / SARB42).